The chain runs to 378 residues: MPHSSLHPSIPQPRGLRAQKAALVLLSACLVALWGLGEPPDYTLKWLVLHLASQQMGLLIKGICSLAEELCHVHSRYHGSYWRAVRACLCSSMRCGALLLLSCYFYCSLPNMADLPFTWMLALLGLSQALNILLGLQGLAPAEVSAICEKRNFNVAHGLAWSYYIGYLRLILPGLPARIQIYNQFHNNTLQGAGSHRLHILFPLDCGVPDDLNVADPNIRFLHELPQQSADRAGIKGRVYTNSIYELLENGQRAGVCVLEYATPLQTLFAMSQDGRAGFSREDRLEQAKLFCRTLEDILANAPESQNNCRLIVYQEPAEGSSFSLSQEILQHLRQEEREVTMGSTETSVMPGSSVLSQEPELLISGLEKPLPLRSDVF.

Residues 1 to 17 are Cytoplasmic-facing; that stretch reads MPHSSLHPSIPQPRGLR. Residues 1–190 are mediates interaction with ZDHHC1 and ZDHHC11; that stretch reads MPHSSLHPSI…IYNQFHNNTL (190 aa). The helical transmembrane segment at 18–34 threads the bilayer; sequence AQKAALVLLSACLVALW. Over 35-44 the chain is Lumenal; the sequence is GLGEPPDYTL. Residues 45 to 69 form a helical membrane-spanning segment; it reads KWLVLHLASQQMGLLIKGICSLAEE. The Cytoplasmic portion of the chain corresponds to 70-91; it reads LCHVHSRYHGSYWRAVRACLCS. The S-palmitoyl cysteine moiety is linked to residue Cys-88. A helical membrane pass occupies residues 92–106; sequence SMRCGALLLLSCYFY. The Lumenal portion of the chain corresponds to 107 to 116; that stretch reads CSLPNMADLP. The chain crosses the membrane as a helical span at residues 117–134; the sequence is FTWMLALLGLSQALNILL. Residues 135 to 378 are Cytoplasmic-facing; sequence GLQGLAPAEV…KPLPLRSDVF (244 aa). A Glycyl lysine isopeptide (Lys-Gly) (interchain with G-Cter in ubiquitin) cross-link involves residue Lys-150. The tract at residues 153–339 is cyclic dinucleotide-binding domain (CBD); sequence FNVAHGLAWS…LQHLRQEERE (187 aa). Ser-162 and Tyr-167 together coordinate 2',3'-cGAMP. Residues Ser-162 and Tyr-167 each coordinate 3',3'-c-di-GMP. 2',3'-cUAMP is bound at residue Tyr-167. Lys-236 is covalently cross-linked (Glycyl lysine isopeptide (Lys-Gly) (interchain with G-Cter in ubiquitin)). 2',3'-cGAMP-binding residues include Arg-238 and Thr-263. Positions 238 and 263 each coordinate 2',3'-cUAMP. Residues 238–241 and Thr-263 each bind 3',3'-c-di-GMP; that span reads RVYT. The interval 339–378 is C-terminal tail (CTT); it reads EVTMGSTETSVMPGSSVLSQEPELLISGLEKPLPLRSDVF. At Ser-354 the chain carries Phosphoserine. Phosphoserine; by TBK1 occurs at positions 357 and 365. The pLxIS motif motif lies at 362 to 365; it reads LLIS.

This sequence belongs to the STING family. As to quaternary structure, homodimer; forms a homodimer in absence of cyclic nucleotide (c-di-GMP or cGAMP); 'Lys-63'-linked ubiquitination at Lys-150 is required for homodimerization. Homotetramer; in presence of cyclic nucleotide (c-di-GMP or cGAMP), forms tetramers and higher-order oligomers through side-by-side packing. Interacts (when phosphorylated) with IRF3; following activation and phosphorylation on the pLxIS motif by TBK1, recruits IRF3. Interacts with RIGI, MAVS and SSR2. Interacts with RNF5 and TRIM56. Interacts with TBK1; when homodimer, leading to subsequent production of IFN-beta. Interacts with IFIT1 and IFIT2. Interacts with TRIM29; this interaction induces STING1 ubiquitination and subsequent degradation. Associates with the MHC-II complex. Interacts with STEEP1; interaction takes place upon cGAMP-activation and STING1 phosphorylation by MAP3K7/TAK1 and promotes STING1 translocation to COPII vesicles. Interacts with SEC24A, SEC24B and SEC24C; promoting translocation to COPII vesicles. Interacts (when ubiquitinated) with SQSTM1; leading to relocalization to autophagosomes. Interacts with SURF4. Interacts with HNRNPA2B1. Interacts with ZDHHC1; ZDHHC1 constitutively interacts with STING1 and in presence of DNA viruses activates it by promoting its cGAMP-induced oligomerization and the recruitment of downstream signaling components. Interacts with ZDHHC11; in presence of DNA viruses promotes the recruitment of IRF3 to STING1. Interacts with TOMM70. Interacts with TAB1; promoting recruitment of TAB1 to the endoplasmic reticulum membrane and subsequent activation of MAP3K7/TAK1. Interacts (via transmembrane domain) with TMEM203. Interacts with DDX41. Phosphorylation by TBK1 leads to activation and production of IFN-beta. Following cyclic nucleotide (c-di-GMP or cGAMP)-binding, activation and translocation from the endoplasmic reticulum, STING1 is phosphorylated by TBK1 at Ser-365 in the pLxIS motif. The phosphorylated pLxIS motif constitutes an IRF3-binding motif, leading to recruitment of the transcription factor IRF3 to induce type-I interferons and other cytokines. Phosphorylated on tyrosine residues upon MHC-II aggregation. Dephosphorylation by PPP6C leads to inactivation and decreased production of IFN-beta. Phosphorylation at Ser-357 is also required to activate IRF3. Phosphorylation at Ser-354 by MAP3K7/TAK1 facilitates its interaction with STEEP1, promoting STING1 translocation to COPII vesicles. In terms of processing, ubiquitinated. Ubiquitinated via 'Lys-63'-linked ubiquitin chains in response to double-stranded DNA treatment, leading to relocalization to autophagosomes and subsequent degradation; this process is dependent on SQSTM1. 'Lys-63'-linked ubiquitination mediated by TRIM56 at Lys-150 promotes homodimerization and recruitment of the antiviral kinase TBK1 and subsequent production of IFN-beta. 'Lys-48'-linked polyubiquitination at Lys-150 occurring after viral infection is mediated by RNF5 and leads to proteasomal degradation. 'Lys-11'-linked polyubiquitination at Lys-150 by RNF26 leads to stabilize STING1: it protects STING1 from RNF5-mediated 'Lys-48'-linked polyubiquitination. 'Lys-33'-linked and 'Lys-48'-linked deubiquitinated by USP20; leading to its stabilization and promotion of innate antiviral response. 'Lys-48'-linked deubiquitinated by USP44; leading to its stabilization and promotion of innate antiviral response. 'Lys-63'-linked deubiquitinated by USP49; leading to inhibition of the subsequent recruitment of TBK1 to the signaling complex. 'Lys-63'-linked ubiquitination mediated by RNF39 promotes the activation of the cGAS-STING pathway. Post-translationally, palmitoylation takes place in the Golgi apparatus and creates a platform for the recruitment of TBK1.

The protein localises to the endoplasmic reticulum membrane. It localises to the cytoplasm. It is found in the perinuclear region. The protein resides in the endoplasmic reticulum-Golgi intermediate compartment membrane. Its subcellular location is the golgi apparatus membrane. The protein localises to the cytoplasmic vesicle. It localises to the autophagosome membrane. It is found in the mitochondrion outer membrane. The protein resides in the cell membrane. The enzyme catalyses H(+)(in) = H(+)(out). Facilitator of innate immune signaling that acts as a sensor of cytosolic DNA from bacteria and viruses and promotes the production of type I interferon (IFN-alpha and IFN-beta). Innate immune response is triggered in response to non-CpG double-stranded DNA from viruses and bacteria delivered to the cytoplasm. Acts by binding cyclic dinucleotides: recognizes and binds cyclic di-GMP (c-di-GMP), a second messenger produced by bacteria, cyclic UMP-AMP (2',3'-cUAMP), and cyclic GMP-AMP (cGAMP), a messenger produced by CGAS in response to DNA virus in the cytosol. Upon binding to c-di-GMP or cGAMP, STING oligomerizes, translocates from the endoplasmic reticulum and is phosphorylated by TBK1 on the pLxIS motif, leading to recruitment and subsequent activation of the transcription factor IRF3 to induce expression of type I interferon and exert a potent anti-viral state. Exhibits 2',3' phosphodiester linkage-specific ligand recognition: can bind both 2'-3' linked cGAMP (2'-3'-cGAMP) and 3'-3' linked cGAMP but is preferentially activated by 2'-3' linked cGAMP. The preference for 2'-3'-cGAMP, compared to other linkage isomers is probably due to the ligand itself, whichs adopts an organized free-ligand conformation that resembles the STING1-bound conformation and pays low energy costs in changing into the active conformation. In addition to promote the production of type I interferons, plays a direct role in autophagy. Following cGAMP-binding, STING1 buds from the endoplasmic reticulum into COPII vesicles, which then form the endoplasmic reticulum-Golgi intermediate compartment (ERGIC). The ERGIC serves as the membrane source for WIPI2 recruitment and LC3 lipidation, leading to formation of autophagosomes that target cytosolic DNA or DNA viruses for degradation by the lysosome. Promotes autophagy by acting as a proton channel that directs proton efflux from the Golgi to facilitate MAP1LC3B/LC3B lipidation. The autophagy- and interferon-inducing activities can be uncoupled and autophagy induction is independent of TBK1 phosphorylation. Autophagy is also triggered upon infection by bacteria: following c-di-GMP-binding, which is produced by live Gram-positive bacteria, promotes reticulophagy. May be involved in translocon function, the translocon possibly being able to influence the induction of type I interferons. May be involved in transduction of apoptotic signals via its association with the major histocompatibility complex class II (MHC-II). This chain is Stimulator of interferon genes protein, found in Bos taurus (Bovine).